A 144-amino-acid chain; its full sequence is Small polypeptide DEVIL 18 (144 aa).

Over residues 30 to 58 (SFSTKTSSSSSKPVFTRSFSTKPTSYSSS) the composition is skewed to low complexity. The segment at 30 to 89 (SFSTKTSSSSSKPVFTRSFSTKPTSYSSSEPIFRRSFSAKPTSSKSPFLSRSGSTKCPVD) is disordered. A helical transmembrane segment spans residues 42–58 (PVFTRSFSTKPTSYSSS). Residues 68-84 (AKPTSSKSPFLSRSGST) show a composition bias toward polar residues. Positions 108–139 (SVTRKCRNMAKEHKSRFYIMKRCVLMLVCWHK) are required for DVL/RTFL small polypeptide activity.

The protein belongs to the DVL/RTFL small polypeptides family.

The protein localises to the cell membrane. In terms of biological role, small polypeptide acting as a regulatory molecule which coordinates cellular responses required for differentiation, growth and development, probably by restricting polar cell proliferation in lateral organs and coordinating socket cell recruitment and differentiation at trichome sites. This is Small polypeptide DEVIL 18 from Arabidopsis thaliana (Mouse-ear cress).